Reading from the N-terminus, the 711-residue chain is DNA ligase (711 aa).

Residues aspartate 39–aspartate 43, serine 88–leucine 89, and glutamate 119 each bind NAD(+). Lysine 121 acts as the N6-AMP-lysine intermediate in catalysis. NAD(+) is bound by residues arginine 142, glutamate 179, lysine 295, and lysine 319. Zn(2+) contacts are provided by cysteine 416, cysteine 419, cysteine 434, and cysteine 440. A BRCT domain is found at glutamate 630–alanine 711.

Belongs to the NAD-dependent DNA ligase family. LigA subfamily. Mg(2+) serves as cofactor. It depends on Mn(2+) as a cofactor.

The enzyme catalyses NAD(+) + (deoxyribonucleotide)n-3'-hydroxyl + 5'-phospho-(deoxyribonucleotide)m = (deoxyribonucleotide)n+m + AMP + beta-nicotinamide D-nucleotide.. DNA ligase that catalyzes the formation of phosphodiester linkages between 5'-phosphoryl and 3'-hydroxyl groups in double-stranded DNA using NAD as a coenzyme and as the energy source for the reaction. It is essential for DNA replication and repair of damaged DNA. This is DNA ligase from Halorhodospira halophila (strain DSM 244 / SL1) (Ectothiorhodospira halophila (strain DSM 244 / SL1)).